The chain runs to 61 residues: Small ribosomal subunit protein uS14 (61 aa).

4 residues coordinate Zn(2+): Cys24, Cys27, Cys40, and Cys43.

This sequence belongs to the universal ribosomal protein uS14 family. Zinc-binding uS14 subfamily. As to quaternary structure, part of the 30S ribosomal subunit. Contacts proteins S3 and S10. Zn(2+) is required as a cofactor.

Functionally, binds 16S rRNA, required for the assembly of 30S particles and may also be responsible for determining the conformation of the 16S rRNA at the A site. The chain is Small ribosomal subunit protein uS14 from Anoxybacillus flavithermus (strain DSM 21510 / WK1).